A 193-amino-acid chain; its full sequence is Potassium-transporting ATPase KdpC subunit (193 aa).

Residues 7 to 27 (PLVVLFVILTAVTGLAYPAVM) traverse the membrane as a helical segment.

It belongs to the KdpC family. The system is composed of three essential subunits: KdpA, KdpB and KdpC.

It localises to the cell inner membrane. Part of the high-affinity ATP-driven potassium transport (or Kdp) system, which catalyzes the hydrolysis of ATP coupled with the electrogenic transport of potassium into the cytoplasm. This subunit acts as a catalytic chaperone that increases the ATP-binding affinity of the ATP-hydrolyzing subunit KdpB by the formation of a transient KdpB/KdpC/ATP ternary complex. This chain is Potassium-transporting ATPase KdpC subunit, found in Burkholderia cenocepacia (strain ATCC BAA-245 / DSM 16553 / LMG 16656 / NCTC 13227 / J2315 / CF5610) (Burkholderia cepacia (strain J2315)).